A 62-amino-acid polypeptide reads, in one-letter code: MARGNQRELARQKNMKKSQEISKGKRKEDSLTTSQRKQRDSEIMQQKQKAANERKSMQTREK.

Composition is skewed to basic and acidic residues over residues 1–30 and 50–62; these read MARG…KEDS and AANE…TREK. Residues 1-62 form a disordered region; sequence MARGNQRELA…ERKSMQTREK (62 aa).

This sequence belongs to the SERF family. As to quaternary structure, interacts with SNCA; this interaction promotes the aggregation of SNCA.

The protein resides in the cytoplasm. It localises to the cytosol. It is found in the nucleus. Its function is as follows. Positive regulator of amyloid protein aggregation and proteotoxicity. Induces conformational changes in amyloid proteins, such as APP, HTT, and SNCA, driving them into compact formations preceding the formation of aggregates. This Bos taurus (Bovine) protein is Small EDRK-rich factor 1 (SERF1).